We begin with the raw amino-acid sequence, 292 residues long: N-acetylneuraminate lyase (292 aa).

The aceneuramate site is built by S47 and T48. The active-site Proton donor is the Y136. K164 serves as the catalytic Schiff-base intermediate with substrate. Aceneuramate contacts are provided by T166, G188, D190, E191, and S207.

It belongs to the DapA family. NanA subfamily. Homotetramer.

The protein resides in the cytoplasm. The catalysed reaction is aceneuramate = aldehydo-N-acetyl-D-mannosamine + pyruvate. It participates in amino-sugar metabolism; N-acetylneuraminate degradation; D-fructose 6-phosphate from N-acetylneuraminate: step 1/5. Catalyzes the reversible aldol cleavage of N-acetylneuraminic acid (sialic acid; Neu5Ac) to form pyruvate and N-acetylmannosamine (ManNAc) via a Schiff base intermediate. This Histophilus somni (strain 129Pt) (Haemophilus somnus) protein is N-acetylneuraminate lyase.